Consider the following 142-residue polypeptide: Large ribosomal subunit protein uL13 (142 aa).

Belongs to the universal ribosomal protein uL13 family. Part of the 50S ribosomal subunit.

Its function is as follows. This protein is one of the early assembly proteins of the 50S ribosomal subunit, although it is not seen to bind rRNA by itself. It is important during the early stages of 50S assembly. This Syntrophus aciditrophicus (strain SB) protein is Large ribosomal subunit protein uL13.